A 673-amino-acid polypeptide reads, in one-letter code: UvrABC system protein B (673 aa).

The Helicase ATP-binding domain maps to 26–183 (EGLEDGLAHQ…RRLAELQYTR (158 aa)). Residue 39–46 (GVTGSGKT) participates in ATP binding. The Beta-hairpin signature appears at 92 to 115 (YYDYYQPEAYVPSSDTFIEKDASV). A Helicase C-terminal domain is found at 431-597 (QVDDLLSEIR…GLNKKVVDIL (167 aa)). The region spanning 633-668 (QQKIHELEGQMMQHAQNLEFEEAAEIRDQLHQLREL) is the UVR domain.

It belongs to the UvrB family. As to quaternary structure, forms a heterotetramer with UvrA during the search for lesions. Interacts with UvrC in an incision complex.

Its subcellular location is the cytoplasm. In terms of biological role, the UvrABC repair system catalyzes the recognition and processing of DNA lesions. A damage recognition complex composed of 2 UvrA and 2 UvrB subunits scans DNA for abnormalities. Upon binding of the UvrA(2)B(2) complex to a putative damaged site, the DNA wraps around one UvrB monomer. DNA wrap is dependent on ATP binding by UvrB and probably causes local melting of the DNA helix, facilitating insertion of UvrB beta-hairpin between the DNA strands. Then UvrB probes one DNA strand for the presence of a lesion. If a lesion is found the UvrA subunits dissociate and the UvrB-DNA preincision complex is formed. This complex is subsequently bound by UvrC and the second UvrB is released. If no lesion is found, the DNA wraps around the other UvrB subunit that will check the other stand for damage. This chain is UvrABC system protein B, found in Citrobacter koseri (strain ATCC BAA-895 / CDC 4225-83 / SGSC4696).